Reading from the N-terminus, the 265-residue chain is Ribosomal RNA small subunit methyltransferase A (265 aa).

S-adenosyl-L-methionine-binding residues include His13, Leu15, Gly40, Glu62, Asp87, and Asn106.

This sequence belongs to the class I-like SAM-binding methyltransferase superfamily. rRNA adenine N(6)-methyltransferase family. RsmA subfamily.

Its subcellular location is the cytoplasm. The catalysed reaction is adenosine(1518)/adenosine(1519) in 16S rRNA + 4 S-adenosyl-L-methionine = N(6)-dimethyladenosine(1518)/N(6)-dimethyladenosine(1519) in 16S rRNA + 4 S-adenosyl-L-homocysteine + 4 H(+). Functionally, specifically dimethylates two adjacent adenosines (A1518 and A1519) in the loop of a conserved hairpin near the 3'-end of 16S rRNA in the 30S particle. May play a critical role in biogenesis of 30S subunits. This is Ribosomal RNA small subunit methyltransferase A from Persephonella marina (strain DSM 14350 / EX-H1).